A 655-amino-acid chain; its full sequence is D-xylonate dehydratase YjhG (655 aa).

Belongs to the IlvD/Edd family.

The catalysed reaction is D-xylonate = 2-dehydro-3-deoxy-D-arabinonate + H2O. Its activity is regulated as follows. Activity is increased in the presence of Mn(+) and Mg(2+). Inhibited by thiol compounds. Functionally, catalyzes the dehydration of D-xylonic acid to form 2-dehydro-3-deoxy-D-pentonate. The protein is D-xylonate dehydratase YjhG (yjhG) of Escherichia coli (strain K12).